Reading from the N-terminus, the 85-residue chain is Large ribosomal subunit protein bL31B (85 aa).

The protein belongs to the bacterial ribosomal protein bL31 family. Type B subfamily. As to quaternary structure, part of the 50S ribosomal subunit.

This Stutzerimonas stutzeri (strain A1501) (Pseudomonas stutzeri) protein is Large ribosomal subunit protein bL31B.